We begin with the raw amino-acid sequence, 721 residues long: MGAFRWLSIAAAASTALALTPEQLITAPRRSEAIPDPSGKVAVFSTSQYSFETHKRTSWWSLLDLKTGQTKVLTNDSSVSEIVWLSDDSILYVNSTNADIPGGVELWVTQASSFAKGYKAASLPASFSGLKAAKTKSGDIRFVAYGQSYPNGTAYNEELATAPLSSARIYDSIYVRHWDYWLSTTFNAVFSGTLKKGHGKNGYSLDGELKNLVSPVKNAESPYPPFGGASDYDLSPDGKWVAFKSKAPELPKANFTTSYIYLVPHDASETARPINGPDSPGTPKGIKGDSSSPVFSPNGDKLAYFQMRDETYESDRRVLYVYSLGSKKTIPSVAGDWDRSPDSVKWTPDGKTLIVGSEDLGRTRLFSLPANAKDDYKPKNFTDGGSVSAYYFLPDSSLLVTGSALWTNWNVYTAKPEKGVIKKIASANEIDPELKGLGPSDISEFYFQGNFTDIHAWVIYPENFDKSKKYPLIFFIHGGPQGNWADGWSTRWNPKAWADQGYVVVAPNPTGSTGFGQALTDAIQNNWGGAPYDDLVKCWEYVHENLDYVDTDHGVAAGASYGGFMINWIQGSPLGRKFKALVSHDGTFVADAKVSTEELWFMQREFNGTFWDARDNYRRWDPSAPERILQFATPMLVIHSDKDYRLPVAEGLSLFNVLQERGVPSRFLNFPDENHWVVNPENSLVWHQQALGWINKYSGVEKSNPNAVSLEDTVVPVVNYN.

The N-terminal stretch at 1-18 (MGAFRWLSIAAAASTALA) is a signal peptide. N-linked (GlcNAc...) asparagine glycans are attached at residues Asn-75, Asn-94, Asn-151, and Asn-254. The interval 271 to 297 (ARPINGPDSPGTPKGIKGDSSSPVFSP) is disordered. Asn-380 and Asn-450 each carry an N-linked (GlcNAc...) asparagine glycan. Ser-560 serves as the catalytic Charge relay system. Asn-607 is a glycosylation site (N-linked (GlcNAc...) asparagine). Residues Asp-643 and His-675 each act as charge relay system in the active site.

It belongs to the peptidase S9C family. Post-translationally, N-glycosylated. Expressed in mycelia and conidia.

The protein localises to the secreted. Functionally, may be involved in metabolism of dipeptides or may affect host defense mechanisms. Has a substrate specificity limited to the hydrolysis of X-Ala, His-Ser, and Ser-Tyr dipeptides at a neutral pH optimum. This chain is Dipeptidyl-peptidase 5, found in Aspergillus fumigatus (strain CBS 144.89 / FGSC A1163 / CEA10) (Neosartorya fumigata).